A 368-amino-acid polypeptide reads, in one-letter code: Histidinol-phosphate aminotransferase (368 aa).

K228 is subject to N6-(pyridoxal phosphate)lysine.

Belongs to the class-II pyridoxal-phosphate-dependent aminotransferase family. Histidinol-phosphate aminotransferase subfamily. Pyridoxal 5'-phosphate is required as a cofactor.

The enzyme catalyses L-histidinol phosphate + 2-oxoglutarate = 3-(imidazol-4-yl)-2-oxopropyl phosphate + L-glutamate. Its pathway is amino-acid biosynthesis; L-histidine biosynthesis; L-histidine from 5-phospho-alpha-D-ribose 1-diphosphate: step 7/9. This chain is Histidinol-phosphate aminotransferase, found in Methanosarcina mazei (strain ATCC BAA-159 / DSM 3647 / Goe1 / Go1 / JCM 11833 / OCM 88) (Methanosarcina frisia).